A 382-amino-acid polypeptide reads, in one-letter code: Chaperone protein DnaJ (382 aa).

The J domain maps to 5–70; it reads DFYEILGVPK…QKRAAYDQYG (66 aa). Residues 137–215 form a CR-type zinc finger; it reads GVTKEIRIPT…CHGHGRVEKT (79 aa). Residues Cys-150, Cys-153, Cys-167, Cys-170, Cys-189, Cys-192, Cys-203, and Cys-206 each coordinate Zn(2+). CXXCXGXG motif repeat units follow at residues 150–157, 167–174, 189–196, and 203–210; these read CDICHGSG, CPTCHGSG, CPHCHGRG, and CNKCHGHG.

The protein belongs to the DnaJ family. As to quaternary structure, homodimer. It depends on Zn(2+) as a cofactor.

The protein resides in the cytoplasm. Participates actively in the response to hyperosmotic and heat shock by preventing the aggregation of stress-denatured proteins and by disaggregating proteins, also in an autonomous, DnaK-independent fashion. Unfolded proteins bind initially to DnaJ; upon interaction with the DnaJ-bound protein, DnaK hydrolyzes its bound ATP, resulting in the formation of a stable complex. GrpE releases ADP from DnaK; ATP binding to DnaK triggers the release of the substrate protein, thus completing the reaction cycle. Several rounds of ATP-dependent interactions between DnaJ, DnaK and GrpE are required for fully efficient folding. Also involved, together with DnaK and GrpE, in the DNA replication of plasmids through activation of initiation proteins. This Enterobacter sp. (strain 638) protein is Chaperone protein DnaJ.